Consider the following 442-residue polypeptide: tRNA modification GTPase MnmE (442 aa).

R27, E84, and K124 together coordinate (6S)-5-formyl-5,6,7,8-tetrahydrofolate. Residues 221-366 (GLHVVIVGAP…LLDALQAFAE (146 aa)) form the TrmE-type G domain. GTP is bound by residues 231–236 (NAGKSS), 250–256 (SEEAGTT), and 275–278 (DTAG). The Mg(2+) site is built by S235 and T256. K442 contacts (6S)-5-formyl-5,6,7,8-tetrahydrofolate.

The protein belongs to the TRAFAC class TrmE-Era-EngA-EngB-Septin-like GTPase superfamily. TrmE GTPase family. As to quaternary structure, homodimer. Heterotetramer of two MnmE and two MnmG subunits. Requires K(+) as cofactor.

The protein localises to the cytoplasm. Exhibits a very high intrinsic GTPase hydrolysis rate. Involved in the addition of a carboxymethylaminomethyl (cmnm) group at the wobble position (U34) of certain tRNAs, forming tRNA-cmnm(5)s(2)U34. This is tRNA modification GTPase MnmE from Brucella suis (strain ATCC 23445 / NCTC 10510).